The primary structure comprises 3102 residues: Laminin subunit alpha lam-3 (3102 aa).

The N-terminal stretch at 1–16 (MRLWLGLLAVSNIALG) is a signal peptide. N-linked (GlcNAc...) asparagine glycosylation is found at Asn-19, Asn-135, and Asn-237. Positions 44 to 295 (SERGLFPNIF…SISDISIGGQ (252 aa)) constitute a Laminin N-terminal domain. 16 disulfides stabilise this stretch: Cys-296/Cys-305, Cys-298/Cys-316, Cys-318/Cys-327, Cys-330/Cys-350, Cys-353/Cys-362, Cys-355/Cys-387, Cys-390/Cys-399, Cys-402/Cys-420, Cys-423/Cys-435, Cys-425/Cys-451, Cys-453/Cys-462, Cys-465/Cys-475, Cys-478/Cys-491, Cys-480/Cys-496, Cys-498/Cys-507, and Cys-510/Cys-525. 4 consecutive Laminin EGF-like domains span residues 296–352 (CICY…VCQQ), 353–422 (CQCF…ACRT), 423–477 (CECD…TCEP), and 478–527 (CPCN…GCQP). The region spanning 548–740 (INNIGWHLTD…QDTLMGGVEV (193 aa)) is the Laminin IV type A 1 domain. Cystine bridges form between Cys-774–Cys-783, Cys-776–Cys-790, Cys-793–Cys-802, Cys-805–Cys-822, Cys-825–Cys-838, Cys-827–Cys-858, Cys-861–Cys-870, Cys-873–Cys-886, Cys-889–Cys-903, Cys-891–Cys-910, Cys-913–Cys-922, Cys-925–Cys-938, Cys-941–Cys-953, Cys-943–Cys-960, Cys-962–Cys-971, Cys-974–Cys-985, Cys-988–Cys-1000, Cys-990–Cys-1007, Cys-1009–Cys-1018, Cys-1021–Cys-1033, Cys-1036–Cys-1049, Cys-1038–Cys-1056, Cys-1058–Cys-1067, Cys-1070–Cys-1083, Cys-1086–Cys-1098, Cys-1088–Cys-1105, Cys-1107–Cys-1116, Cys-1119–Cys-1131, Cys-1134–Cys-1144, Cys-1137–Cys-1151, and Cys-1153–Cys-1162. Laminin EGF-like domains are found at residues 774 to 824 (CDCH…ACEQ), 825 to 888 (CECP…KCIE), 889 to 940 (CTCN…TCKP), 941 to 987 (CGCH…GCPA), 988 to 1035 (CDCN…GCQF), 1036 to 1085 (CHCN…GCED), 1086 to 1133 (CGCD…GCTE), 1134 to 1180 (CEPC…GCKL), 1181 to 1226 (CDCS…TCEP), and 1227 to 1283 (CGCN…GCTE). A glycan (N-linked (GlcNAc...) asparagine) is linked at Asn-796. N-linked (GlcNAc...) asparagine glycosylation is present at Asn-991. Asn-1027 carries N-linked (GlcNAc...) asparagine glycosylation. Asn-1076 is a glycosylation site (N-linked (GlcNAc...) asparagine). N-linked (GlcNAc...) asparagine glycosylation is present at Asn-1164. Disulfide bonds link Cys-1165/Cys-1178, Cys-1181/Cys-1193, Cys-1183/Cys-1200, Cys-1202/Cys-1211, Cys-1214/Cys-1224, Cys-1227/Cys-1246, Cys-1229/Cys-1252, Cys-1254/Cys-1263, and Cys-1266/Cys-1281. Asn-1288 carries an N-linked (GlcNAc...) asparagine glycan. A Laminin IV type A 2 domain is found at 1295 to 1496 (QSDLVWQQMY…STTKAIGVEK (202 aa)). 12 disulfide bridges follow: Cys-1540-Cys-1549, Cys-1542-Cys-1556, Cys-1559-Cys-1568, Cys-1571-Cys-1587, Cys-1590-Cys-1603, Cys-1592-Cys-1614, Cys-1617-Cys-1626, Cys-1629-Cys-1644, Cys-1647-Cys-1659, Cys-1649-Cys-1666, Cys-1668-Cys-1677, and Cys-1680-Cys-1691. 3 Laminin EGF-like domains span residues 1540 to 1589 (CSCH…ACTK), 1590 to 1646 (CACP…TCSP), and 1647 to 1693 (CDCH…VCTS). Asn-1717, Asn-1734, Asn-1777, Asn-1806, Asn-1839, Asn-1875, Asn-1969, Asn-1984, and Asn-2048 each carry an N-linked (GlcNAc...) asparagine glycan. The disordered stretch occupies residues 2061–2084 (EAVSKMLGSEGSESGDANEESLRS). N-linked (GlcNAc...) asparagine glycosylation is found at Asn-2091, Asn-2193, Asn-2369, and Asn-2479. Laminin G-like domains lie at 2467–2644 (SQRG…TDGC), 2652–2839 (DKII…IGMC), and 2913–3088 (RYGL…AKAC). Cysteines 2617 and 2644 form a disulfide. 2 N-linked (GlcNAc...) asparagine glycosylation sites follow: Asn-2672 and Asn-2686. Cys-2814 and Cys-2839 form a disulfide bridge. Asn-2932, Asn-2959, and Asn-3007 each carry an N-linked (GlcNAc...) asparagine glycan. Cys-3058 and Cys-3088 are disulfide-bonded.

As to quaternary structure, laminin is a complex glycoprotein, consisting of three different polypeptide chains (alpha, beta, gamma), which are bound to each other by disulfide bonds into a cross-shaped molecule comprising one long and three short arms with globules at each end.

It is found in the secreted. Its subcellular location is the extracellular space. It localises to the extracellular matrix. The protein localises to the basement membrane. Functionally, binding to cells via a high affinity receptor, laminin is thought to mediate the attachment, migration and organization of cells into tissues during embryonic development by interacting with other extracellular matrix components. Required to assemble a stable basement membrane and for organizing receptor complexes and cytoskeletal components to the proper cell surfaces. During embryogenesis, does not require the presence of collagen type IV in order to associate with cell surfaces, prior to assembly of the prototypical basement membrane. Plays an important role in muscle contraction of the body. Probably plays a distinct role from the related laminin subunit alpha epi-1. This chain is Laminin subunit alpha lam-3, found in Caenorhabditis elegans.